A 258-amino-acid chain; its full sequence is GTP cyclohydrolase FolE2 (258 aa).

It belongs to the GTP cyclohydrolase IV family.

The catalysed reaction is GTP + H2O = 7,8-dihydroneopterin 3'-triphosphate + formate + H(+). Its pathway is cofactor biosynthesis; 7,8-dihydroneopterin triphosphate biosynthesis; 7,8-dihydroneopterin triphosphate from GTP: step 1/1. Converts GTP to 7,8-dihydroneopterin triphosphate. This chain is GTP cyclohydrolase FolE2, found in Pseudothermotoga lettingae (strain ATCC BAA-301 / DSM 14385 / NBRC 107922 / TMO) (Thermotoga lettingae).